The following is a 124-amino-acid chain: Small ribosomal subunit protein uS12 (124 aa).

A 3-methylthioaspartic acid modification is found at D89.

This sequence belongs to the universal ribosomal protein uS12 family. Part of the 30S ribosomal subunit. Contacts proteins S8 and S17. May interact with IF1 in the 30S initiation complex.

Its function is as follows. With S4 and S5 plays an important role in translational accuracy. Interacts with and stabilizes bases of the 16S rRNA that are involved in tRNA selection in the A site and with the mRNA backbone. Located at the interface of the 30S and 50S subunits, it traverses the body of the 30S subunit contacting proteins on the other side and probably holding the rRNA structure together. The combined cluster of proteins S8, S12 and S17 appears to hold together the shoulder and platform of the 30S subunit. The protein is Small ribosomal subunit protein uS12 of Aliivibrio salmonicida (strain LFI1238) (Vibrio salmonicida (strain LFI1238)).